The chain runs to 257 residues: Leucine-rich repeat-containing protein 3 (257 aa).

An N-terminal signal peptide occupies residues 1–32; that stretch reads MGPRGRQSPSSPLAPSQGSCFFILFCLRLGAS. Residues 33–64 enclose the LRRNT domain; the sequence is CPQSCQCPDHAGAVAVHCSSRGLQEIPRDIPA. 3 LRR repeats span residues 65–86, 89–110, and 114–135; these read NTVLLKLDANRISRVPNGAFQH, QLRELDLSHNAIEAIGPAAFSG, and GLRLLDLSHNRIRRIPKDALGK. Residues 145–198 enclose the LRRCT domain; sequence NPLHCECALQEALWELKLDPDSVDEIACHTSAQEQFVGKPLIQVLDSGASFCST. Residues 205-225 form a helical membrane-spanning segment; that stretch reads VAMLVTMFGWFTMVIAYVVYY.

It belongs to the LRRC3 family.

The protein resides in the membrane. In Rattus norvegicus (Rat), this protein is Leucine-rich repeat-containing protein 3 (Lrrc3).